The sequence spans 245 residues: 2,3-bisphosphoglycerate-dependent phosphoglycerate mutase 1 (245 aa).

Substrate contacts are provided by residues R8–N15, T21–G22, R60, E87–Y90, K98, R114–R115, and G183–N184. The Tele-phosphohistidine intermediate role is filled by H9. E87 functions as the Proton donor/acceptor in the catalytic mechanism.

This sequence belongs to the phosphoglycerate mutase family. BPG-dependent PGAM subfamily.

It carries out the reaction (2R)-2-phosphoglycerate = (2R)-3-phosphoglycerate. Its pathway is carbohydrate degradation; glycolysis; pyruvate from D-glyceraldehyde 3-phosphate: step 3/5. In terms of biological role, catalyzes the interconversion of 2-phosphoglycerate and 3-phosphoglycerate. The chain is 2,3-bisphosphoglycerate-dependent phosphoglycerate mutase 1 from Bacillus cereus (strain ATCC 10987 / NRS 248).